We begin with the raw amino-acid sequence, 545 residues long: Sphingosine-1-phosphate lyase (545 aa).

At 1-26 the chain is on the lumenal side; sequence MRPFSGSDCLKPVTEGINRAFGAKEP. A helical; Signal-anchor for type III membrane protein transmembrane segment spans residues 27-47; sequence WQVATITATTVLGGVWLWTVI. Topologically, residues 48 to 545 are cytoplasmic; that stretch reads CQDENLYIRG…HSMYYTPSQK (498 aa). K342 carries the N6-(pyridoxal phosphate)lysine modification.

Belongs to the group II decarboxylase family. Sphingosine-1-phosphate lyase subfamily. Requires pyridoxal 5'-phosphate as cofactor. Localized to the developing gut primordium during embryogenesis.

It is found in the endoplasmic reticulum membrane. It carries out the reaction sphinganine 1-phosphate = hexadecanal + phosphoethanolamine. It participates in lipid metabolism; sphingolipid metabolism. Cleaves phosphorylated sphingoid bases (PSBs), such as sphingosine-1-phosphate, into fatty aldehydes and phosphoethanolamine. Sphingolipid catabolism is required for normal development including viability, reproduction and muscle development. In Drosophila melanogaster (Fruit fly), this protein is Sphingosine-1-phosphate lyase.